The chain runs to 226 residues: Eukaryotic translation initiation factor 3 subunit K (226 aa).

A PCI domain is found at 42-200; that stretch reads YNLDANLSLL…QLIVLPRNEF (159 aa).

The protein belongs to the eIF-3 subunit K family. In terms of assembly, component of the eukaryotic translation initiation factor 3 (eIF-3) complex.

It localises to the cytoplasm. Component of the eukaryotic translation initiation factor 3 (eIF-3) complex, which is involved in protein synthesis of a specialized repertoire of mRNAs and, together with other initiation factors, stimulates binding of mRNA and methionyl-tRNAi to the 40S ribosome. The eIF-3 complex specifically targets and initiates translation of a subset of mRNAs involved in cell proliferation. This Oryza sativa subsp. japonica (Rice) protein is Eukaryotic translation initiation factor 3 subunit K (TIF3K1).